The chain runs to 442 residues: 2-oxoisovalerate dehydrogenase subunit alpha, mitochondrial (442 aa).

The transit peptide at 1–42 (MSAAKIWRPSRGLRQAALLLLGRSGVRGLARSHPSRQQQQQF) directs the protein to the mitochondrion. The disordered stretch occupies residues 30 to 50 (ARSHPSRQQQQQFPSLDDKPQ). Thiamine diphosphate-binding residues include Tyr155 and Arg156. Ser203 contacts K(+). Ser204 lines the thiamine diphosphate pocket. 3 residues coordinate K(+): Pro205, Thr208, and Gln209. A Mg(2+)-binding site is contributed by Glu235. The thiamine diphosphate site is built by Gly236, Ala237, and Arg262. Mg(2+) contacts are provided by Asn264 and Tyr266. Position 333 (His333) interacts with thiamine diphosphate. Residue Ser334 is modified to Phosphoserine; by BCKDK. Thr335 is modified (phosphothreonine). Ser336 and Ser344 each carry phosphoserine. The residue at position 353 (Lys353) is an N6-acetyllysine; alternate. An N6-succinyllysine; alternate modification is found at Lys353. Lys377 carries the N6-succinyllysine modification.

It belongs to the BCKDHA family. In terms of assembly, heterotetramer of 2 alpha/BCKDHA and 2 beta chains/BCKDHB that forms the branched-chain alpha-keto acid decarboxylase (E1) component of the BCKD complex. The branched-chain alpha-ketoacid dehydrogenase is a large complex composed of three major building blocks E1, E2 and E3. It is organized around E2, a 24-meric cubic core composed of DBT, to which are associated 6 to 12 copies of E1, and approximately 6 copies of the dehydrogenase E3, a DLD dimer. Interacts with PPM1K. Thiamine diphosphate serves as cofactor. Requires Mg(2+) as cofactor. Phosphorylated at Ser-334 by BCKDK and dephosphorylated by protein phosphatase PPM1K.

The protein localises to the mitochondrion matrix. It carries out the reaction N(6)-[(R)-lipoyl]-L-lysyl-[protein] + 3-methyl-2-oxobutanoate + H(+) = N(6)-[(R)-S(8)-2-methylpropanoyldihydrolipoyl]-L-lysyl-[protein] + CO2. In terms of biological role, together with BCKDHB forms the heterotetrameric E1 subunit of the mitochondrial branched-chain alpha-ketoacid dehydrogenase (BCKD) complex. The BCKD complex catalyzes the multi-step oxidative decarboxylation of alpha-ketoacids derived from the branched-chain amino-acids valine, leucine and isoleucine producing CO2 and acyl-CoA which is subsequently utilized to produce energy. The E1 subunit catalyzes the first step with the decarboxylation of the alpha-ketoacid forming an enzyme-product intermediate. A reductive acylation mediated by the lipoylamide cofactor of E2 extracts the acyl group from the E1 active site for the next step of the reaction. This Mus musculus (Mouse) protein is 2-oxoisovalerate dehydrogenase subunit alpha, mitochondrial.